A 1286-amino-acid polypeptide reads, in one-letter code: Ankyrin-repeat and fibronectin type III domain-containing 1 (1286 aa).

ANK repeat units follow at residues 274-303 (QGNEAMFEAVEQQDLDAVQLLLYQYTPEEL) and 311-340 (EGLTPLDIAIMTNNVPIARILLRTGARESP). Residues 411–507 (VPANACLMVS…TTTPVCASPS (97 aa)) enclose the Fibronectin type-III domain. Positions 748–755 (GLYLGYLK) are highly conserved peptide sequence. Positions 999 to 1011 (SSHIDCLPSTSPS) are enriched in polar residues. 4 disordered regions span residues 999–1032 (SSHIDCLPSTSPSPEMHRRKAVSESQPCSDEEGC), 1086–1106 (KASMGPGQDPQGPGQGPDTDH), 1187–1207 (AEDPGEAEGPGPVVDGPRGLP), and 1242–1286 (AGQD…SSML). Positions 1260–1277 (SSLPSSTSSEMSPDPTSP) are enriched in low complexity.

Expressed in both the suprachiasmatic nucleus and dorsal medial hypothalamus.

Its function is as follows. May play a role in neuronal function. In Mus musculus (Mouse), this protein is Ankyrin-repeat and fibronectin type III domain-containing 1.